The following is an 852-amino-acid chain: Leucine--tRNA ligase (852 aa).

Positions 51 to 61 (PYPSGDLHMGH) match the 'HIGH' region motif. Positions 615 to 619 (KMSKS) match the 'KMSKS' region motif. Residue Lys618 coordinates ATP.

It belongs to the class-I aminoacyl-tRNA synthetase family.

Its subcellular location is the cytoplasm. It carries out the reaction tRNA(Leu) + L-leucine + ATP = L-leucyl-tRNA(Leu) + AMP + diphosphate. This chain is Leucine--tRNA ligase, found in Clavibacter sepedonicus (Clavibacter michiganensis subsp. sepedonicus).